The chain runs to 93 residues: Putative pterin-4-alpha-carbinolamine dehydratase (93 aa).

The protein belongs to the pterin-4-alpha-carbinolamine dehydratase family.

The catalysed reaction is (4aS,6R)-4a-hydroxy-L-erythro-5,6,7,8-tetrahydrobiopterin = (6R)-L-erythro-6,7-dihydrobiopterin + H2O. In Synechococcus sp. (strain WH7803), this protein is Putative pterin-4-alpha-carbinolamine dehydratase.